We begin with the raw amino-acid sequence, 994 residues long: Leucine-rich repeat receptor-like kinase protein FLORAL ORGAN NUMBER1 (994 aa).

An N-terminal signal peptide occupies residues 1–17 (MPPTLLLLLLLLPPSLA). LRR repeat units lie at residues 73–93 (AINL…IALL), 94–117 (DSLA…LPTL), 118–141 (PSLR…DSGG), 147–171 (FPSL…SASH), 172–194 (ARLR…SYGD), 195–219 (LAAL…LSRL), 244–268 (LGAL…LGRL), 269–292 (QRLD…LGDL), 293–316 (SSLA…LANL), 318–340 (NLKL…VAGF), 341–364 (AQLE…LGKN), 365–388 (GRLK…LCAG), 390–412 (RLEM…LGDC), 413–436 (KTLT…LFNL), 438–459 (QANM…VIGG), 460–483 (DKIG…IGNL), 484–507 (PALQ…IGNL), 509–531 (NLSR…LIRC), 533–555 (SLAA…ITSL), 556–579 (KILC…MSNM), and 581–604 (SLTT…QFLV). 5 N-linked (GlcNAc...) asparagine glycosylation sites follow: N75, N98, N124, N129, and N159. N256 is a glycosylation site (N-linked (GlcNAc...) asparagine). N315 is a glycosylation site (N-linked (GlcNAc...) asparagine). N352 carries an N-linked (GlcNAc...) asparagine glycan. N-linked (GlcNAc...) asparagine glycosylation is found at N495, N509, and N514. 2 N-linked (GlcNAc...) asparagine glycosylation sites follow: N562 and N578. N606 is a glycosylation site (N-linked (GlcNAc...) asparagine). The helical transmembrane segment at 647 to 667 (KKMLVALVAAFAAVAVAFLGA) threads the bilayer. The 275-residue stretch at 704-978 (VKEDNIIGKG…TMREVVHMLS (275 aa)) folds into the Protein kinase domain. ATP-binding positions include 710–718 (IGKGGAGIV) and K731. Residue D828 is the Proton acceptor of the active site.

Belongs to the protein kinase superfamily. Ser/Thr protein kinase family. Expressed in shoot apical meristem, and after transition to the reproductive phase, detected in the inflorescence and the floral meristems. Expressed uniformly throughout the meristems. Expressed also in floral organ primordia, such as the palea, lemma, lodicules, stamens, carpels and ovules.

Its subcellular location is the membrane. The catalysed reaction is L-seryl-[protein] + ATP = O-phospho-L-seryl-[protein] + ADP + H(+). It carries out the reaction L-threonyl-[protein] + ATP = O-phospho-L-threonyl-[protein] + ADP + H(+). Its function is as follows. Receptor-like kinase protein that regulates the size of the floral meristem. The sequence is that of Leucine-rich repeat receptor-like kinase protein FLORAL ORGAN NUMBER1 (FON1) from Oryza sativa subsp. japonica (Rice).